A 488-amino-acid polypeptide reads, in one-letter code: MESVSKESYLPSFHQFPLCASLSEFESASSKETQSSALKNISPHPYDILQAPNSRALISALKTLQNKICRLESEKTHARDRLTNLSRAAGEHKKVLESEKRSAEWAAQEATSQKNDVAMQLNNAEQRCSLLEKQLDYMRKMMENADIQNNPIHQIPAQKEQKDMLEMQSKLQKLEVLENECLRLKATHKSSENKIQFLEEKLSVEEQERKALQDKAAQVQTSLEVNRILLSSASSQNSTQRKVKKKKQSKQKNAISKEPSSKEPLSKEPPSKCFFPKAGELPFVAGKSTTSSHSLSANVQNMLHMMKHQSPRVSQKDPKTVEHKPSILPGGSRSIPTRLMSSSTGDTLSDILLALQDELGQMSFEHQELLKHIDETKNTDMREDLERELDYLVKQMEIKSDQIIKLKRHQLNVAKLKKTAKKQPRPPSTTKPAEDEQNIGATDPCTPRNKGNLANGTGTPNSKASLELLKSVRKIQMTLKKDDIMWEK.

Residues 71–226 (LESEKTHARD…AQVQTSLEVN (156 aa)) adopt a coiled-coil conformation. 2 disordered regions span residues 232–272 (SASS…PPSK) and 311–342 (PRVS…LMSS). A compositionally biased stretch (basic residues) spans 241–250 (RKVKKKKQSK). Composition is skewed to basic and acidic residues over residues 259 to 270 (PSSKEPLSKEPP) and 314 to 325 (SQKDPKTVEHKP). Residues 377–403 (KNTDMREDLERELDYLVKQMEIKSDQI) are a coiled coil. Residues 416-464 (LKKTAKKQPRPPSTTKPAEDEQNIGATDPCTPRNKGNLANGTGTPNSKA) form a disordered region. Residues 452–464 (NLANGTGTPNSKA) are compositionally biased toward polar residues.

This sequence belongs to the translokin family. In terms of assembly, interacts with clip1, mis12, ndc80 and zwint. Interacts with gamma-tubulin.

It is found in the cytoplasm. The protein localises to the cytoskeleton. The protein resides in the microtubule organizing center. Its subcellular location is the centrosome. It localises to the chromosome. It is found in the centromere. The protein localises to the kinetochore. The protein resides in the spindle. Functionally, required for spindle microtubule attachment to both kinetochores and centrosomes. Also functions to tether minus-ends of spindle microtubules to centrosomes. May act by forming ring-like structures around microtubules, or by serving as a cross-linker or scaffold at the attachment site. The protein is Centrosomal protein cep57l1 (cep57l1) of Xenopus laevis (African clawed frog).